The chain runs to 405 residues: Phosphoglycerate kinase (405 aa).

Substrate is bound by residues 24–26 (DFN), arginine 40, 63–66 (HLGR), arginine 122, and arginine 162. ATP contacts are provided by residues lysine 212, glutamate 331, and 361 to 364 (GGDS).

It belongs to the phosphoglycerate kinase family. As to quaternary structure, monomer.

The protein localises to the cytoplasm. The enzyme catalyses (2R)-3-phosphoglycerate + ATP = (2R)-3-phospho-glyceroyl phosphate + ADP. The protein operates within carbohydrate degradation; glycolysis; pyruvate from D-glyceraldehyde 3-phosphate: step 2/5. This Corynebacterium glutamicum (strain R) protein is Phosphoglycerate kinase.